We begin with the raw amino-acid sequence, 273 residues long: Shikimate dehydrogenase (NADP(+)) (273 aa).

Shikimate is bound by residues 15–17 (SQS) and Thr62. The Proton acceptor role is filled by Lys66. An NADP(+)-binding site is contributed by Glu78. The shikimate site is built by Asn87 and Asp102. NADP(+) is bound by residues 127-131 (GAGGA), 151-156 (NRTVTK), and Met215. Tyr217 is a shikimate binding site. Gly239 serves as a coordination point for NADP(+).

Belongs to the shikimate dehydrogenase family. In terms of assembly, homodimer.

It carries out the reaction shikimate + NADP(+) = 3-dehydroshikimate + NADPH + H(+). It functions in the pathway metabolic intermediate biosynthesis; chorismate biosynthesis; chorismate from D-erythrose 4-phosphate and phosphoenolpyruvate: step 4/7. Functionally, involved in the biosynthesis of the chorismate, which leads to the biosynthesis of aromatic amino acids. Catalyzes the reversible NADPH linked reduction of 3-dehydroshikimate (DHSA) to yield shikimate (SA). The protein is Shikimate dehydrogenase (NADP(+)) of Laribacter hongkongensis (strain HLHK9).